Consider the following 208-residue polypeptide: Large ribosomal subunit protein uL3 (208 aa).

Residue Gln150 is modified to N5-methylglutamine.

Belongs to the universal ribosomal protein uL3 family. In terms of assembly, part of the 50S ribosomal subunit. Forms a cluster with proteins L14 and L19. In terms of processing, methylated by PrmB.

Functionally, one of the primary rRNA binding proteins, it binds directly near the 3'-end of the 23S rRNA, where it nucleates assembly of the 50S subunit. The chain is Large ribosomal subunit protein uL3 from Buchnera aphidicola subsp. Cinara cedri (strain Cc).